Consider the following 1409-residue polypeptide: Inositol hexakisphosphate and diphosphoinositol-pentakisphosphate kinase 1 (1409 aa).

64 to 65 is a substrate binding site; that stretch reads KK. Residues R145, K198, H205, R224, 248–251, and 257–259 each bind ATP; these read EEFM and DVK. Residue 224-225 coordinates substrate; that stretch reads RK. Substrate-binding residues include K259 and R273. ATP-binding positions include S275, D320, and 332 to 334; that span reads DVN. 337-340 lines the substrate pocket; that stretch reads SFVK. Residues 382–453 are polyphosphoinositide-binding domain; it reads PTTSGTMMEL…VLDITRLLLA (72 aa). The interval 891-996 is disordered; that stretch reads GVEEEGSAPA…PTEMKQSGLG (106 aa). S920 and S963 each carry phosphoserine. The segment covering 981–996 has biased composition (polar residues); that stretch reads FSSSRPPTEMKQSGLG. Phosphoserine is present on residues S1013 and S1049. Over residues 1110-1119 the composition is skewed to polar residues; sequence MHSSQASDNP. Residues 1110 to 1183 are disordered; that stretch reads MHSSQASDNP…PSLNSHVAEE (74 aa). A phosphoserine mark is found at S1121 and S1128. A compositionally biased stretch (low complexity) spans 1144 to 1162; the sequence is SSGPSSTVSSAGPSSPTTV. Residues 1163 to 1178 are compositionally biased toward polar residues; that stretch reads DGNSQFGFSDQPSLNS.

Belongs to the histidine acid phosphatase family. VIP1 subfamily.

The protein localises to the cytoplasm. The protein resides in the cytosol. Its subcellular location is the cell membrane. It carries out the reaction 1D-myo-inositol hexakisphosphate + ATP = 1-diphospho-1D-myo-inositol 2,3,4,5,6-pentakisphosphate + ADP. The catalysed reaction is 5-diphospho-1D-myo-inositol 1,2,3,4,6-pentakisphosphate + ATP + H(+) = 1,5-bis(diphospho)-1D-myo-inositol 2,3,4,6-tetrakisphosphate + ADP. Functionally, bifunctional inositol kinase that acts in concert with the IP6K kinases IP6K1, IP6K2 and IP6K3 to synthesize the diphosphate group-containing inositol pyrophosphates diphosphoinositol pentakisphosphate, PP-InsP5, and bis-diphosphoinositol tetrakisphosphate, (PP)2-InsP4. PP-InsP5 and (PP)2-InsP4, also respectively called InsP7 and InsP8, regulate a variety of cellular processes, including apoptosis, vesicle trafficking, cytoskeletal dynamics, exocytosis, insulin signaling and neutrophil activation. Phosphorylates inositol hexakisphosphate (InsP6) at position 1 to produce PP-InsP5 which is in turn phosphorylated by IP6Ks to produce (PP)2-InsP4. Alternatively, phosphorylates PP-InsP5 at position 1, produced by IP6Ks from InsP6, to produce (PP)2-InsP4. Activated when cells are exposed to hyperosmotic stress. This is Inositol hexakisphosphate and diphosphoinositol-pentakisphosphate kinase 1 from Pongo abelii (Sumatran orangutan).